The primary structure comprises 734 residues: Monosaccharide-sensing protein 1 (734 aa).

Transmembrane regions (helical) follow at residues 6 to 26 (LVAL…ATIA), 44 to 64 (GLVV…SGPI), 79 to 99 (VMYF…VLCF), 102 to 122 (LLNG…ISET), 133 to 153 (TLPQ…VFTM), and 163 to 183 (AMLG…VFYL). The disordered stretch occupies residues 351-403 (YNKDNDDYATDDGAGDDDDSDNDLRSPLMSRQTTSMDKDMIPHPTSGSTLSMR). The segment covering 357-371 (DYATDDGAGDDDDSD) has biased composition (acidic residues). A phosphoserine mark is found at Ser-446 and Ser-480. 6 helical membrane-spanning segments follow: residues 510–530 (ALVV…NGVL), 556–576 (ASFL…VVAM), 588–608 (LLWT…SELI), 621–641 (GCVV…PNIL), 653–673 (LCIA…TYSL), and 680–700 (IGLV…WIFV).

This sequence belongs to the major facilitator superfamily. Sugar transporter (TC 2.A.1.1) family. As to quaternary structure, binds to VIK at the tonoplast. In terms of processing, phosphorylated by VIK; this activation promotes carrier activity. As to expression, mostly expressed in juvenile and adult leaves, to a lower extent, in flower tissues, and, at low levels, in roots and stems.

Its subcellular location is the vacuole membrane. The catalysed reaction is D-glucose(out) + H(+)(in) = D-glucose(in) + H(+)(out). It carries out the reaction sucrose(out) + H(+)(in) = sucrose(in) + H(+)(out). With respect to regulation, enhanced activation by VIK-mediated phosphorylation promoting carrier activity and consequently vacuolar sugar accumulation. Its function is as follows. Sugar proton-coupled antiporter which contributes to vacuolar sugar import (e.g. monosaccharides including glucose, sucrose and fructose), particularly during stress responses (e.g. in response to cold). Required for cytosolic glucose homeostasis. The sequence is that of Monosaccharide-sensing protein 1 from Arabidopsis thaliana (Mouse-ear cress).